We begin with the raw amino-acid sequence, 89 residues long: MGRTKKVGPAGRFGPRYGMRIRRRVAEIESVQRQKHECPVCHKRAVKRVGTGIWRCTKCGAEFTGGAYYPETEAQRIVRRAIRKALEEK.

4 residues coordinate Zn(2+): Cys38, Cys41, Cys56, and Cys59. A C4-type zinc finger spans residues 38-59 (CPVCHKRAVKRVGTGIWRCTKC).

It belongs to the eukaryotic ribosomal protein eL43 family. Putative zinc-binding subfamily. Part of the 50S ribosomal subunit. The cofactor is Zn(2+).

Functionally, binds to the 23S rRNA. The polypeptide is Large ribosomal subunit protein eL43 (Methanopyrus kandleri (strain AV19 / DSM 6324 / JCM 9639 / NBRC 100938)).